The sequence spans 393 residues: Ferrochelatase, mitochondrial (393 aa).

The N-terminal 31 residues, 1 to 31 (MLSRTIRTQGSFLRRSQLTITRSFSVTFNMQ), are a transit peptide targeting the mitochondrion. Asp351 is an active-site residue.

Belongs to the ferrochelatase family. Post-translationally, the leader peptide may be processed in two proteolytic steps, first between Ser-23 and Phe-24, second and by a different protease, to yield the mature protein.

It is found in the mitochondrion inner membrane. It catalyses the reaction heme b + 2 H(+) = protoporphyrin IX + Fe(2+). It participates in porphyrin-containing compound metabolism; protoheme biosynthesis; protoheme from protoporphyrin-IX: step 1/1. In terms of biological role, catalyzes the ferrous insertion into protoporphyrin IX. The protein is Ferrochelatase, mitochondrial (HEM15) of Saccharomyces cerevisiae (strain ATCC 204508 / S288c) (Baker's yeast).